Consider the following 634-residue polypeptide: uncharacterized protein (634 aa).

The N-terminal stretch at 1 to 40 (MWLQQRLKGLPGLLSSSWARRLLCLLGLLVLLLWFASSGA) is a signal peptide. At 41–589 (RRAAGGLHLP…DEHMAQQDPG (549 aa)) the chain is on the extracellular side. N-linked (GlcNAc...) asparagine glycosylation occurs at N363. The helical transmembrane segment at 590-610 (LPFLFWFSVASLITLFHLFLF) threads the bilayer. Topologically, residues 611–634 (KLIYNEYCGPGAKPLFRSKEDPSV) are cytoplasmic.

It localises to the membrane. This is an uncharacterized protein from Mus musculus (Mouse).